Here is a 213-residue protein sequence, read N- to C-terminus: UPF0111 protein TM_0914 (213 aa).

This sequence belongs to the UPF0111 family.

The protein is UPF0111 protein TM_0914 of Thermotoga maritima (strain ATCC 43589 / DSM 3109 / JCM 10099 / NBRC 100826 / MSB8).